A 518-amino-acid polypeptide reads, in one-letter code: E3 ubiquitin-protein ligase TRIM39 (518 aa).

Residues 29–70 (CSVCLEYLKEPVIIECGHNFCKACITRWWEDLERDFPCPVCR) form an RING-type zinc finger. The B box-type zinc-finger motif lies at 102-143 (RDESLCPQHHEALSLFCYEDQEAVCLICAISHTHRAHTVVPL). Residues cysteine 107, histidine 110, cysteine 129, and histidine 135 each contribute to the Zn(2+) site. Residues 181 to 250 (ELKRLVESRR…AHLAAEVEGK (70 aa)) adopt a coiled-coil conformation. Interaction with CDKN1A stretches follow at residues 268 to 337 (KNIP…QLIA) and 389 to 518 (TSGR…TDWE). In terms of domain architecture, B30.2/SPRY spans 319-514 (SNFPRQYFAL…NAAPLTIRPP (196 aa)).

It belongs to the TRIM/RBCC family. As to quaternary structure, isoform 1 interacts with MOAP1. Isoform 1 and isoform 2 interact with CDKN1A. Isoform 2 interacts (via domain B box-type) with CACTIN. Autoubiquitinated. Ubiquitous; highly expressed in brain, heart, kidney, liver, skeletal muscle, spleen and testis.

It is found in the cytoplasm. Its subcellular location is the cytosol. The protein localises to the mitochondrion. It localises to the nucleus. It carries out the reaction S-ubiquitinyl-[E2 ubiquitin-conjugating enzyme]-L-cysteine + [acceptor protein]-L-lysine = [E2 ubiquitin-conjugating enzyme]-L-cysteine + N(6)-ubiquitinyl-[acceptor protein]-L-lysine.. Its pathway is protein modification; protein ubiquitination. In terms of biological role, E3 ubiquitin-protein ligase. May facilitate apoptosis by inhibiting APC/C-Cdh1-mediated poly-ubiquitination and subsequent proteasome-mediated degradation of the pro-apoptotic protein MOAP1. Regulates the G1/S transition of the cell cycle and DNA damage-induced G2 arrest by stabilizing CDKN1A/p21. Positively regulates CDKN1A/p21 stability by competing with DTL for CDKN1A/p21 binding, therefore disrupting DCX(DTL) E3 ubiquitin ligase complex-mediated CDKN1A/p21 ubiquitination and degradation. Regulates the G1/S transition of the cell cycle and DNA damage-induced G2 arrest by stabilizing CDKN1A/p21. Positively regulates CDKN1A/p21 stability by competing with DTL for CDKN1A/p21 binding, therefore disrupting DCX(DTL) E3 ubiquitin ligase complex-mediated CDKN1A/p21 ubiquitination and degradation. Negatively regulates the canonical NF-kappa-B signaling pathway via stabilization of CACTIN in an ubiquitination-independent manner. The polypeptide is E3 ubiquitin-protein ligase TRIM39 (TRIM39) (Homo sapiens (Human)).